We begin with the raw amino-acid sequence, 626 residues long: Elongation factor 4 (626 aa).

Residues 14–195 enclose the tr-type G domain; the sequence is SLIRNFCIIA…RIVVDVPAPT (182 aa). Residues 26-31 and 142-145 each bind GTP; these read DHGKST and NKID. A disordered region spans residues 603-626; sequence LSTGEGGNDRDTKDKIRAAQKSEG. The span at 609-626 shows a compositional bias: basic and acidic residues; sequence GNDRDTKDKIRAAQKSEG.

Belongs to the TRAFAC class translation factor GTPase superfamily. Classic translation factor GTPase family. LepA subfamily.

The protein localises to the cell membrane. It catalyses the reaction GTP + H2O = GDP + phosphate + H(+). Its function is as follows. Required for accurate and efficient protein synthesis under certain stress conditions. May act as a fidelity factor of the translation reaction, by catalyzing a one-codon backward translocation of tRNAs on improperly translocated ribosomes. Back-translocation proceeds from a post-translocation (POST) complex to a pre-translocation (PRE) complex, thus giving elongation factor G a second chance to translocate the tRNAs correctly. Binds to ribosomes in a GTP-dependent manner. This chain is Elongation factor 4, found in Bifidobacterium animalis subsp. lactis (strain AD011).